The sequence spans 144 residues: Transcription antitermination protein NusB (144 aa).

This sequence belongs to the NusB family.

Involved in transcription antitermination. Required for transcription of ribosomal RNA (rRNA) genes. Binds specifically to the boxA antiterminator sequence of the ribosomal RNA (rrn) operons. In Dictyoglomus turgidum (strain DSM 6724 / Z-1310), this protein is Transcription antitermination protein NusB.